A 445-amino-acid chain; its full sequence is FAS-associated factor 2 (445 aa).

Alanine 2 is subject to N-acetylalanine. The UBA domain occupies 12-48 (EQTEKLLQFQDLTGIESMDQCRHTLEQHNWNIEAAVQ). An N6-acetyllysine modification is found at lysine 167. The stretch at 275 to 350 (SERLEREERN…EEKERKLECL (76 aa)) forms a coiled coil. The segment at 299–361 (ASLRADQEKE…PEPSPDDPES (63 aa)) is disordered. The span at 303 to 348 (ADQEKERKKREERERKRRKEEEVQQQKLAEERRRRNLQEEKERKLE) shows a compositional bias: basic and acidic residues. The UBX domain occupies 357-439 (DDPESVKIIF…GLSHTEVLFV (83 aa)).

Identified in a complex that contains SEL1L, OS9, FAF2/UBXD8, UBE2J1/UBC6E and AUP1. Interacts with YOD1. Interacts (via N-terminus) with UBQLN2 (via C-terminus). Interacts with PNPLA2 and UBAC2. Interacts with ZFAND2B; probably through VCP. Interacts with LMBR1L.

The protein resides in the cytoplasm. Its subcellular location is the lipid droplet. The protein localises to the endoplasmic reticulum. In terms of biological role, plays an important role in endoplasmic reticulum-associated degradation (ERAD) that mediates ubiquitin-dependent degradation of misfolded endoplasmic reticulum proteins. By controlling the steady-state expression of the IGF1R receptor, indirectly regulates the insulin-like growth factor receptor signaling pathway. Involved in inhibition of lipid droplet degradation by binding to phospholipase PNPL2 and inhibiting its activity by promoting dissociation of PNPL2 from its endogenous activator, ABHD5 which inhibits the rate of triacylglycerol hydrolysis. Involved in stress granule disassembly: associates with ubiquitinated G3BP1 in response to heat shock, thereby promoting interaction between ubiquitinated G3BP1 and VCP, followed by G3BP1 extraction from stress granules and stress granule disassembly. In Bos taurus (Bovine), this protein is FAS-associated factor 2 (FAF2).